A 334-amino-acid polypeptide reads, in one-letter code: Leukocyte cell-derived chemotaxin 1 (334 aa).

A helical membrane pass occupies residues 45–65 (VVLISGAVLLLFGAIGAFYFW). The 98-residue stretch at 104-201 (GSGAEEAIAV…LCGDLPIFWL (98 aa)) folds into the BRICHOS domain. Cys131 and Cys193 are disulfide-bonded. Positions 211–214 (RERR) are excised as a propeptide. The tract at residues 218 to 268 (RKIVPTTTKRPHSGPRSNPGAGRLNNETRPSVQEDSQAFNPDNPYHQQEGE) is disordered. A compositionally biased stretch (polar residues) spans 242–257 (NNETRPSVQEDSQAFN). Asn243 is a glycosylation site (N-linked (GlcNAc...) asparagine). Intrachain disulfides connect Cys282–Cys286, Cys283–Cys323, Cys293–Cys317, and Cys297–Cys313.

It belongs to the chondromodulin-1 family. Post-translationally, after cleavage, the post-translationally modified ChM-I is secreted as a glycoprotein. As to expression, detected in cartilage and cardiac valves (at protein level). Detected in the laminae fibrosa, spongiosa and ventricularis layers of normal cardiac valves (at protein level). Expression is decreased cardiac valves of patients with valvular heart disease (at protein level). Weakly expressed in chondrosarcoma.

It is found in the secreted. The protein resides in the extracellular space. The protein localises to the extracellular matrix. It localises to the endomembrane system. Bifunctional growth regulator that stimulates the growth of cultured chondrocytes in the presence of basic fibroblast growth factor (FGF) but inhibits the growth of cultured vascular endothelial cells. May contribute to the rapid growth of cartilage and vascular invasion prior to the replacement of cartilage by bone during endochondral bone development. Inhibits in vitro tube formation and mobilization of endothelial cells. Plays a role as antiangiogenic factor in cardiac valves to suppress neovascularization. In Homo sapiens (Human), this protein is Leukocyte cell-derived chemotaxin 1.